Reading from the N-terminus, the 69-residue chain is Large ribosomal subunit protein bL32c (69 aa).

It belongs to the bacterial ribosomal protein bL32 family.

It localises to the plastid. Its subcellular location is the chloroplast. The polypeptide is Large ribosomal subunit protein bL32c (Pelargonium hortorum (Common geranium)).